A 293-amino-acid chain; its full sequence is Fructose-bisphosphate aldolase (293 aa).

S50 serves as a coordination point for D-glyceraldehyde 3-phosphate. The active-site Proton donor is D85. H86, D106, E136, and H178 together coordinate Zn(2+). G179 contacts dihydroxyacetone phosphate. H208 is a binding site for Zn(2+). Dihydroxyacetone phosphate is bound by residues 209-211 (GGS) and 230-233 (NVNT).

Belongs to the class II fructose-bisphosphate aldolase family. Requires Zn(2+) as cofactor.

The enzyme catalyses beta-D-fructose 1,6-bisphosphate = D-glyceraldehyde 3-phosphate + dihydroxyacetone phosphate. It functions in the pathway carbohydrate degradation; glycolysis; D-glyceraldehyde 3-phosphate and glycerone phosphate from D-glucose: step 4/4. Catalyzes the aldol condensation of dihydroxyacetone phosphate (DHAP or glycerone-phosphate) with glyceraldehyde 3-phosphate (G3P) to form fructose 1,6-bisphosphate (FBP) in gluconeogenesis and the reverse reaction in glycolysis. This Streptococcus pyogenes serotype M3 (strain ATCC BAA-595 / MGAS315) protein is Fructose-bisphosphate aldolase (fba).